A 431-amino-acid polypeptide reads, in one-letter code: Argininosuccinate lyase (431 aa).

The protein belongs to the lyase 1 family. Argininosuccinate lyase subfamily.

The protein localises to the cytoplasm. It carries out the reaction 2-(N(omega)-L-arginino)succinate = fumarate + L-arginine. The protein operates within amino-acid biosynthesis; L-arginine biosynthesis; L-arginine from L-ornithine and carbamoyl phosphate: step 3/3. This Stenotrophomonas maltophilia (strain K279a) protein is Argininosuccinate lyase.